The following is a 437-amino-acid chain: Ribulose bisphosphate carboxylase/oxygenase activase, chloroplastic (437 aa).

Positions 1–10 are enriched in polar residues; it reads MATAVSTIGS. Positions 1-26 are disordered; it reads MATAVSTIGSVNRAPPNLNGSSSSAS. 165-172 contributes to the ATP binding site; sequence GGKGQGKS.

This sequence belongs to the RuBisCO activase family.

It localises to the plastid. The protein localises to the chloroplast stroma. Its function is as follows. Activation of RuBisCO (ribulose-1,5-bisphosphate carboxylase/oxygenase; EC 4.1.1.39) involves the ATP-dependent carboxylation of the epsilon-amino group of lysine leading to a carbamate structure. The protein is Ribulose bisphosphate carboxylase/oxygenase activase, chloroplastic (RCA) of Malus domestica (Apple).